Reading from the N-terminus, the 213-residue chain is MYQDKILVRQLGLQPYEAISQAMHNFTDMRDENSHDEIWLVEHYPVFTQGQAGKAEHILMPGDIPVVQSDRGGQVTYHGPGQQVMYVLLNLKRRKLGVRDLVTLLEQTVVNTLAEIGIEAHPRADAPGVYVGEKKICSLGLRIRRGCSFHGLALNVNMDLSPFLRINPCGYAGMEMAKITQWKEDATTDNIAPRLLANILALLNNPPYEYIAA.

The 176-residue stretch at 32 to 207 (ENSHDEIWLV…NILALLNNPP (176 aa)) folds into the BPL/LPL catalytic domain. Substrate contacts are provided by residues 71 to 78 (RGGQVTYH), 138 to 140 (SLG), and 151 to 153 (GLA). Cys169 functions as the Acyl-thioester intermediate in the catalytic mechanism.

Belongs to the LipB family.

It localises to the cytoplasm. The catalysed reaction is octanoyl-[ACP] + L-lysyl-[protein] = N(6)-octanoyl-L-lysyl-[protein] + holo-[ACP] + H(+). Its pathway is protein modification; protein lipoylation via endogenous pathway; protein N(6)-(lipoyl)lysine from octanoyl-[acyl-carrier-protein]: step 1/2. Its function is as follows. Catalyzes the transfer of endogenously produced octanoic acid from octanoyl-acyl-carrier-protein onto the lipoyl domains of lipoate-dependent enzymes. Lipoyl-ACP can also act as a substrate although octanoyl-ACP is likely to be the physiological substrate. The chain is Octanoyltransferase from Salmonella paratyphi A (strain ATCC 9150 / SARB42).